The following is a 380-amino-acid chain: tRNA(Met) cytidine acetate ligase (380 aa).

ATP is bound by residues 7–20 (IAEYNPFHNGHLYQ), Gly-101, Asn-151, and Arg-176.

The protein belongs to the TmcAL family.

The protein localises to the cytoplasm. The catalysed reaction is cytidine(34) in elongator tRNA(Met) + acetate + ATP = N(4)-acetylcytidine(34) in elongator tRNA(Met) + AMP + diphosphate. Catalyzes the formation of N(4)-acetylcytidine (ac(4)C) at the wobble position of elongator tRNA(Met), using acetate and ATP as substrates. First activates an acetate ion to form acetyladenylate (Ac-AMP) and then transfers the acetyl group to tRNA to form ac(4)C34. In Ligilactobacillus salivarius (strain UCC118) (Lactobacillus salivarius), this protein is tRNA(Met) cytidine acetate ligase.